The sequence spans 126 residues: Histone H2B 8 (126 aa).

The span at 1 to 12 (MPEPAKSAPAPK) shows a compositional bias: low complexity. Positions 1-35 (MPEPAKSAPAPKKGSKKAVTKTQKKGDKKRRKTRK) are disordered. N6-acetyllysine occurs at positions 6 and 13. Residues 13–34 (KGSKKAVTKTQKKGDKKRRKTR) are compositionally biased toward basic residues. Serine 15 carries the post-translational modification Phosphoserine. 2 positions are modified to N6-acetyllysine: lysine 16 and lysine 21. Residue serine 113 is glycosylated (O-linked (GlcNAc) serine). Lysine 121 participates in a covalent cross-link: Glycyl lysine isopeptide (Lys-Gly) (interchain with G-Cter in ubiquitin).

It belongs to the histone H2B family. As to quaternary structure, the nucleosome is a histone octamer containing two molecules each of H2A, H2B, H3 and H4 assembled in one H3-H4 heterotetramer and two H2A-H2B heterodimers. The octamer wraps approximately 147 bp of DNA. Post-translationally, monoubiquitination of Lys-121 by the BRE1 gives a specific tag for epigenetic transcriptional activation and is also prerequisite for histone H3 'Lys-4' and 'Lys-79' methylation. Phosphorylated on Ser-15 during apoptosis; which facilitates apoptotic chromatin condensation. In terms of processing, glcNAcylation at Ser-113 promotes monoubiquitination of Lys-121. It fluctuates in response to extracellular glucose, and associates with transcribed genes.

It localises to the nucleus. The protein localises to the chromosome. Its function is as follows. Core component of nucleosome. Nucleosomes wrap and compact DNA into chromatin, limiting DNA accessibility to the cellular machineries which require DNA as a template. Histones thereby play a central role in transcription regulation, DNA repair, DNA replication and chromosomal stability. DNA accessibility is regulated via a complex set of post-translational modifications of histones, also called histone code, and nucleosome remodeling. The chain is Histone H2B 8 (H2B-VIII) from Gallus gallus (Chicken).